The following is a 451-amino-acid chain: MGKYFGTDGVRGEANVELTPELAFKLGRFGGYVLSQHETERPKVFVARDTRISGEMLESALIAGLLSVGIEVYKLGVLATPGVSYLVRTEKASAGVMISASHNPALDNGIKFFGNDGFKLADDQELEIEALLDAPEDTLPRPSAEGLGTLVDYPEGLRKYEKFLVTTGTDLSGMTVALDTANGAASVSARDVFLDLNAEIAVIGEKPNGLNINDGVGSTRPEQLQELVKETGADLGLAFDGDSDRLIAVDETGEIVDGDRIMFIIGKYLSEKGLLAHNTIVTTVMSNLGFHKALDKQGINKAITAVGDRYVVEEMRSSGYNLGGEQSGHVIIMDYNTTGDGQLTAIQLAKVMKETGKSLSELAAEVTIYPQKLVNIRVENSMKERAMEVPAIANIIAKMEDEMAGNGRILVRPSGTEPLLRVMAEAPTDAEVDYYVDTIADVVRTEIGCDN.

S101 (phosphoserine intermediate) is an active-site residue. Residues S101, D240, D242, and D244 each contribute to the Mg(2+) site. Phosphoserine is present on S101.

It belongs to the phosphohexose mutase family. Requires Mg(2+) as cofactor. In terms of processing, activated by phosphorylation.

It carries out the reaction alpha-D-glucosamine 1-phosphate = D-glucosamine 6-phosphate. Catalyzes the conversion of glucosamine-6-phosphate to glucosamine-1-phosphate. The polypeptide is Phosphoglucosamine mutase (Streptococcus pyogenes serotype M1).